Consider the following 565-residue polypeptide: Protein nucleotidyltransferase YdiU (565 aa).

Residues Gly-118, Gly-120, Arg-121, Lys-141, Asp-153, Gly-154, Arg-211, and Arg-218 each contribute to the ATP site. Residue Asp-290 is the Proton acceptor of the active site. Residues Asn-291 and Asp-300 each contribute to the Mg(2+) site. Asp-300 serves as a coordination point for ATP.

This sequence belongs to the SELO family. It depends on Mg(2+) as a cofactor. Mn(2+) is required as a cofactor.

The enzyme catalyses L-seryl-[protein] + ATP = 3-O-(5'-adenylyl)-L-seryl-[protein] + diphosphate. It carries out the reaction L-threonyl-[protein] + ATP = 3-O-(5'-adenylyl)-L-threonyl-[protein] + diphosphate. The catalysed reaction is L-tyrosyl-[protein] + ATP = O-(5'-adenylyl)-L-tyrosyl-[protein] + diphosphate. It catalyses the reaction L-histidyl-[protein] + UTP = N(tele)-(5'-uridylyl)-L-histidyl-[protein] + diphosphate. The enzyme catalyses L-seryl-[protein] + UTP = O-(5'-uridylyl)-L-seryl-[protein] + diphosphate. It carries out the reaction L-tyrosyl-[protein] + UTP = O-(5'-uridylyl)-L-tyrosyl-[protein] + diphosphate. Its function is as follows. Nucleotidyltransferase involved in the post-translational modification of proteins. It can catalyze the addition of adenosine monophosphate (AMP) or uridine monophosphate (UMP) to a protein, resulting in modifications known as AMPylation and UMPylation. The protein is Protein nucleotidyltransferase YdiU of Nitrosospira multiformis (strain ATCC 25196 / NCIMB 11849 / C 71).